A 194-amino-acid polypeptide reads, in one-letter code: MIAYIQGSITYKSPTQLIVDVGGIGYELQISLQTYDSLKDIAASCKIFTYLHITQDAHTLYGFSTIEEKQCFLQLLSVNGIGPRVAITILSALTPEALQQAIMTHDTITLQAVKGIGQKAAQRIILELQGKVGKVGNMLSLQPSGQEAIYQEALAALSKLGIHKSTAEKTVAAILKEHQGEITVESLIKLALKG.

Positions 1-64 (MIAYIQGSIT…QDAHTLYGFS (64 aa)) are domain I. The interval 65–143 (TIEEKQCFLQ…KVGNMLSLQP (79 aa)) is domain II. The segment at 144–150 (SGQEAIY) is flexible linker. The domain III stretch occupies residues 150-194 (YQEALAALSKLGIHKSTAEKTVAAILKEHQGEITVESLIKLALKG).

It belongs to the RuvA family. Homotetramer. Forms an RuvA(8)-RuvB(12)-Holliday junction (HJ) complex. HJ DNA is sandwiched between 2 RuvA tetramers; dsDNA enters through RuvA and exits via RuvB. An RuvB hexamer assembles on each DNA strand where it exits the tetramer. Each RuvB hexamer is contacted by two RuvA subunits (via domain III) on 2 adjacent RuvB subunits; this complex drives branch migration. In the full resolvosome a probable DNA-RuvA(4)-RuvB(12)-RuvC(2) complex forms which resolves the HJ.

The protein localises to the cytoplasm. The RuvA-RuvB-RuvC complex processes Holliday junction (HJ) DNA during genetic recombination and DNA repair, while the RuvA-RuvB complex plays an important role in the rescue of blocked DNA replication forks via replication fork reversal (RFR). RuvA specifically binds to HJ cruciform DNA, conferring on it an open structure. The RuvB hexamer acts as an ATP-dependent pump, pulling dsDNA into and through the RuvAB complex. HJ branch migration allows RuvC to scan DNA until it finds its consensus sequence, where it cleaves and resolves the cruciform DNA. The sequence is that of Holliday junction branch migration complex subunit RuvA from Amoebophilus asiaticus (strain 5a2).